A 784-amino-acid polypeptide reads, in one-letter code: MSRARDAGCVAAGIVIGASAWYCVYKYTRGKDQKKKRLTKPKNRASVGTGSRARAGLRAGFTIDLGPGFSPPNPVDIEIMNKAQGEASNLATTVAEEVAPAAPSPKVQNGAESKVQELNGAKTEANLESVVMPSATCTVTPPPKVAGGLTAAEAPEIIGAPKVLEAPSTTEASGAVAAPGPTVSPMIAQTPGPVVPSPTIVSTGPAAIPWAVAHPGAVQSPGPAVPPMAVQSLVPAAPSWAVVAPPGAVYIPVAAHFAGPAAASRVTQSPGTVIPPLPPPSSVLPRGVPSVPGRTVQSPGAAVHPVAAQSTGVVVPPRAVQYSGAAVTSGGAAVPSGGAATPRAAASTQRTASTEVMQVPRVAAATEATETPRIGTPAMVAEASLPVHSGAAENPGTSGSSKTAATGKKAAPGAHTGAIPKAGSATGAVPKGGGGKGGNKNRSGGKGKNRKNKVDVDELGMGFRPGDGAAAAAAASANGGQAFLAEIPESEEGESGWTDTESDSDSEPDVPQRGKGKRTIPMHKRPFPYEIDEILGVRDLRKVLALLQKSDDPFIQQVALLTLSNNANYSCNQETIRKLGGLPIIANMINKTDPHIKEKALMAMNNLSENYENQGRLQVYMNKVMDDIMASNLNSAVQVVGLKFLTNMTITNDYQHLLVNSIANFFRLLSQGGGKIKVEILKILSNFAENPDMLKKLLGTQVPSSFSSLYNSYVESEILINALTLFEIIFDNLRAEVFNYREFNKGSLFYLCTTSGVCVKKIRALANHHDLLVKVKVIKLVNKF.

Residues 1 to 6 are Mitochondrial intermembrane-facing; the sequence is MSRARD. Mitochondrion outer membrane (MOM)-targeting sequence stretches follow at residues 1–6 and 26–40; these read MSRARD and KYTR…RLTK. A helical; Signal-anchor membrane pass occupies residues 7 to 27; sequence AGCVAAGIVIGASAWYCVYKY. Topologically, residues 28-784 are cytoplasmic; sequence TRGKDQKKKR…VKVIKLVNKF (757 aa). Disordered regions lie at residues 328–353, 388–461, and 488–522; these read TSGG…RTAS, HSGA…ELGM, and PESE…TIPM. Over residues 396 to 418 the composition is skewed to low complexity; the sequence is GTSGSSKTAATGKKAAPGAHTGA. A compositionally biased stretch (acidic residues) spans 488–508; it reads PESEEGESGWTDTESDSDSEP. ARM repeat units lie at residues 528 to 568, 570 to 609, and 650 to 689; these read PYEI…NNAN, SCNQ…NLSE, and ITND…NFAE.

This sequence belongs to the eutherian X-chromosome-specific Armcx family. As to expression, widely expressed in the adult nervous tissue, especially in the forebrain, including the cerebral cortex, hippocampus and thalamus.

The protein resides in the mitochondrion. The protein localises to the mitochondrion outer membrane. Its function is as follows. May regulate the dynamics and distribution of mitochondria in neural cells. The polypeptide is Armadillo repeat-containing X-linked protein 2 (Armcx2) (Mus musculus (Mouse)).